A 196-amino-acid polypeptide reads, in one-letter code: Molybdenum cofactor guanylyltransferase (196 aa).

GTP-binding positions include 10-12 (LAG), Lys23, Asn51, Asp69, and Asp99. Asp99 is a Mg(2+) binding site.

This sequence belongs to the MobA family. Monomer. Requires Mg(2+) as cofactor.

The protein localises to the cytoplasm. It catalyses the reaction Mo-molybdopterin + GTP + H(+) = Mo-molybdopterin guanine dinucleotide + diphosphate. Functionally, transfers a GMP moiety from GTP to Mo-molybdopterin (Mo-MPT) cofactor (Moco or molybdenum cofactor) to form Mo-molybdopterin guanine dinucleotide (Mo-MGD) cofactor. This Shewanella amazonensis (strain ATCC BAA-1098 / SB2B) protein is Molybdenum cofactor guanylyltransferase.